Consider the following 283-residue polypeptide: Pantothenate synthetase (283 aa).

30 to 37 serves as a coordination point for ATP; that stretch reads MGALHRGH. Catalysis depends on H37, which acts as the Proton donor. Q61 provides a ligand contact to (R)-pantoate. Q61 is a binding site for beta-alanine. An ATP-binding site is contributed by 147–150; sequence GQKD. Position 153 (Q153) interacts with (R)-pantoate. ATP is bound by residues I176 and 184 to 187; that span reads MSSR.

The protein belongs to the pantothenate synthetase family. In terms of assembly, homodimer.

It localises to the cytoplasm. The catalysed reaction is (R)-pantoate + beta-alanine + ATP = (R)-pantothenate + AMP + diphosphate + H(+). The protein operates within cofactor biosynthesis; (R)-pantothenate biosynthesis; (R)-pantothenate from (R)-pantoate and beta-alanine: step 1/1. Its function is as follows. Catalyzes the condensation of pantoate with beta-alanine in an ATP-dependent reaction via a pantoyl-adenylate intermediate. The polypeptide is Pantothenate synthetase (Cytophaga hutchinsonii (strain ATCC 33406 / DSM 1761 / CIP 103989 / NBRC 15051 / NCIMB 9469 / D465)).